A 1072-amino-acid chain; its full sequence is Rho family-interacting cell polarization regulator 2 (1072 aa).

Residues 83-112 (NGLDEYLEVHQTELDKLTAQLKDMRRNSRL) adopt a coiled-coil conformation. Residues 173-470 (RESLTEINRS…ATTATQHRAR (298 aa)) are necessary for interaction with NCAM and myoblast protrusion formation. Disordered regions lie at residues 439–465 (DRVP…TTAT) and 683–718 (EVEK…AGSP). Polar residues predominate over residues 447 to 460 (AEPSSAHVTSSPDI). The segment covering 683 to 698 (EVEKNSYRTEHPEARG) has biased composition (basic and acidic residues).

This sequence belongs to the RIPOR family. As to quaternary structure, homooligomer; homooligomerization is regulated by RHOC and leads to the formation of concatemers through the association of N- and C-termini. Interacts with NCAM; this interaction is necessary for myoblast protrusion formation. Expressed in myoblast and myotubes (at protein level). Expressed in brain, eyes and skeletal muscle.

The protein localises to the cytoplasm. It localises to the cytoskeleton. Its subcellular location is the cell projection. It is found in the filopodium. The protein resides in the apical cell membrane. The protein localises to the stereocilium. It localises to the stereocilium membrane. Functionally, acts as an inhibitor of the small GTPase RHOA and plays several roles in the regulation of myoblast and hair cell differentiation, lymphocyte T proliferation and neutrophil polarization. Plays a role in fetal mononuclear myoblast differentiation by promoting filopodia and myotube formation. Maintains naive T lymphocytes in a quiescent state and prevents chemokine-induced T lymphocyte responses, such as cell adhesion, polarization and migration. Involved also in the regulation of neutrophil polarization, chemotaxis and adhesion. Required for normal development of inner and outer hair cell stereocilia within the cochlea of the inner ear. Plays a role for maintaining the structural organization of the basal domain of stereocilia. Involved in mechanosensory hair cell function. Required for normal hearing. This chain is Rho family-interacting cell polarization regulator 2, found in Coturnix japonica (Japanese quail).